The primary structure comprises 354 residues: Uroporphyrinogen decarboxylase (354 aa).

Substrate is bound by residues R27–R31, D77, Y154, T209, and H327.

It belongs to the uroporphyrinogen decarboxylase family. In terms of assembly, homodimer.

It is found in the cytoplasm. The catalysed reaction is uroporphyrinogen III + 4 H(+) = coproporphyrinogen III + 4 CO2. It functions in the pathway porphyrin-containing compound metabolism; protoporphyrin-IX biosynthesis; coproporphyrinogen-III from 5-aminolevulinate: step 4/4. Its function is as follows. Catalyzes the decarboxylation of four acetate groups of uroporphyrinogen-III to yield coproporphyrinogen-III. The protein is Uroporphyrinogen decarboxylase of Pseudomonas putida (strain GB-1).